A 567-amino-acid chain; its full sequence is Proline--tRNA ligase (567 aa).

This sequence belongs to the class-II aminoacyl-tRNA synthetase family. ProS type 1 subfamily. As to quaternary structure, homodimer.

It localises to the cytoplasm. It carries out the reaction tRNA(Pro) + L-proline + ATP = L-prolyl-tRNA(Pro) + AMP + diphosphate. Catalyzes the attachment of proline to tRNA(Pro) in a two-step reaction: proline is first activated by ATP to form Pro-AMP and then transferred to the acceptor end of tRNA(Pro). As ProRS can inadvertently accommodate and process non-cognate amino acids such as alanine and cysteine, to avoid such errors it has two additional distinct editing activities against alanine. One activity is designated as 'pretransfer' editing and involves the tRNA(Pro)-independent hydrolysis of activated Ala-AMP. The other activity is designated 'posttransfer' editing and involves deacylation of mischarged Ala-tRNA(Pro). The misacylated Cys-tRNA(Pro) is not edited by ProRS. This chain is Proline--tRNA ligase, found in Staphylococcus epidermidis (strain ATCC 35984 / DSM 28319 / BCRC 17069 / CCUG 31568 / BM 3577 / RP62A).